Consider the following 458-residue polypeptide: Monomethylamine methyltransferase MtmB2 (458 aa).

Residue Pyl202 is a non-standard amino acid, pyrrolysine.

The protein belongs to the monomethylamine methyltransferase family. Can form a complex with MtmC (MtmC1 or MtmC2).

It carries out the reaction Co(I)-[methylamine-specific corrinoid protein] + methylamine + H(+) = methyl-Co(III)-[methylamine-specific corrinoid protein] + NH4(+). Its pathway is one-carbon metabolism; methanogenesis from methylamine. Functionally, catalyzes the transfer of the methyl group from monomethylamine to the corrinoid cofactor of MtmC (MtmC1 or MtmC2). In Methanosarcina barkeri, this protein is Monomethylamine methyltransferase MtmB2 (mtmB2).